A 553-amino-acid polypeptide reads, in one-letter code: CTP synthase (553 aa).

The tract at residues 1–270 (MTKYVFVTGG…DELICEELKL (270 aa)) is amidoligase domain. Ser-13 provides a ligand contact to CTP. Position 13 (Ser-13) interacts with UTP. ATP contacts are provided by residues 14–19 (SLGKGI) and Asp-71. Asp-71 and Glu-144 together coordinate Mg(2+). CTP-binding positions include 151 to 153 (DIE), 191 to 196 (KTKPTQ), and Lys-227. UTP-binding positions include 191 to 196 (KTKPTQ) and Lys-227. The 253-residue stretch at 295–547 (TIGMVGKYVE…VEAARAHHEA (253 aa)) folds into the Glutamine amidotransferase type-1 domain. Position 356 (Gly-356) interacts with L-glutamine. Cys-383 (nucleophile; for glutamine hydrolysis) is an active-site residue. L-glutamine is bound by residues 384–387 (LGMQ), Glu-407, and Arg-473. Active-site residues include His-520 and Glu-522.

The protein belongs to the CTP synthase family. As to quaternary structure, homotetramer.

The enzyme catalyses UTP + L-glutamine + ATP + H2O = CTP + L-glutamate + ADP + phosphate + 2 H(+). The catalysed reaction is L-glutamine + H2O = L-glutamate + NH4(+). It catalyses the reaction UTP + NH4(+) + ATP = CTP + ADP + phosphate + 2 H(+). It functions in the pathway pyrimidine metabolism; CTP biosynthesis via de novo pathway; CTP from UDP: step 2/2. Its activity is regulated as follows. Allosterically activated by GTP, when glutamine is the substrate; GTP has no effect on the reaction when ammonia is the substrate. The allosteric effector GTP functions by stabilizing the protein conformation that binds the tetrahedral intermediate(s) formed during glutamine hydrolysis. Inhibited by the product CTP, via allosteric rather than competitive inhibition. In terms of biological role, catalyzes the ATP-dependent amination of UTP to CTP with either L-glutamine or ammonia as the source of nitrogen. Regulates intracellular CTP levels through interactions with the four ribonucleotide triphosphates. In Paraburkholderia phymatum (strain DSM 17167 / CIP 108236 / LMG 21445 / STM815) (Burkholderia phymatum), this protein is CTP synthase.